Here is a 461-residue protein sequence, read N- to C-terminus: Vimentin (461 aa).

Composition is skewed to low complexity over residues 1–14 (MNRT…SSSS) and 35–52 (SSRQ…SYSV). The interval 1 to 52 (MNRTTSRQTTSSSSYKRMFGGEGRPSVGMARSTLSSRQYSSPVRSSRMSYSV) is disordered. Residues 1 to 91 (MNRTTSRQTT…FALSDAINSE (91 aa)) form a head region. Residues 92–127 (FKANRTNEKAEMQHLNDRFASYIDKVRFLEQQNKIL) form a coil 1A region. A coiled-coil region spans residues 92–127 (FKANRTNEKAEMQHLNDRFASYIDKVRFLEQQNKIL). Residues 99-407 (EKAEMQHLND…KLLEGEESRI (309 aa)) form the IF rod domain. A linker 1 region spans residues 128 to 149 (LAELEQLKGKGASRIGDLYEDE). A coiled-coil region spans residues 150-241 (MRDLRRQVDQ…KLHDEEVAEL (92 aa)). The segment at 150-241 (MRDLRRQVDQ…KLHDEEVAEL (92 aa)) is coil 1B. Residues 242–264 (QAQIQDQHVQIDMDVAKPDLTAA) are linker 12. Residues 265-403 (LRDVRVQYET…ATYRKLLEGE (139 aa)) are coil 2. Residues 299 to 403 (NRNTDAIRQA…ATYRKLLEGE (105 aa)) are a coiled coil. A tail region spans residues 404–461 (ESRITTPMPNFSSFNLRESMLEARPMIDNLSKKVVIKTIETRDGHVINESTQNHDDLE).

Belongs to the intermediate filament family. Homomer assembled from elementary dimers. Post-translationally, one of the most prominent phosphoproteins in various cells of mesenchymal origin. Phosphorylation is enhanced during cell division, at which time vimentin filaments are significantly reorganized.

It is found in the cytoplasm. The protein localises to the cytoskeleton. It localises to the nucleus matrix. In terms of biological role, vimentins are class-III intermediate filaments found in various non-epithelial cells, especially mesenchymal cells. Vimentin is attached to the nucleus, endoplasmic reticulum, and mitochondria, either laterally or terminally. The protein is Vimentin (vim) of Oncorhynchus mykiss (Rainbow trout).